The chain runs to 972 residues: Hemoglobin and hemoglobin-haptoglobin-binding protein (972 aa).

A signal peptide spans 1–22 (MKANKLSAITLCILGYAHTVYA). The TonB box signature appears at 32-39 (ETIVVSSE). Positions 38-167 (SEDDSVHNKN…LGGTVSFESK (130 aa)) constitute a TBDR plug domain. Positions 175–972 (DKNYHFGYKT…NFRVNAEITF (798 aa)) constitute a TBDR beta-barrel domain. The TonB C-terminal box motif lies at 955 to 972 (KRFNAPGRNFRVNAEITF).

It belongs to the TonB-dependent receptor family. Hemoglobin/haptoglobin binding protein subfamily.

It localises to the cell outer membrane. In terms of biological role, acts as a receptor for hemoglobin or the hemoglobin/haptoglobin complex of the host and is required for heme uptake. May be involved in virulence. The sequence is that of Hemoglobin and hemoglobin-haptoglobin-binding protein from Haemophilus ducreyi (strain 35000HP / ATCC 700724).